We begin with the raw amino-acid sequence, 375 residues long: tRNA-specific 2-thiouridylase MnmA (375 aa).

ATP-binding positions include Gly8–Ser15 and Met34. Residues Asn104–Asp106 are interaction with target base in tRNA. Cys109 (nucleophile) is an active-site residue. Cysteines 109 and 205 form a disulfide. Residue Gly133 coordinates ATP. The interval Lys155–Gln157 is interaction with tRNA. Cys205 acts as the Cysteine persulfide intermediate in catalysis. Residues Arg313 to Tyr314 are interaction with tRNA.

Belongs to the MnmA/TRMU family.

It is found in the cytoplasm. The enzyme catalyses S-sulfanyl-L-cysteinyl-[protein] + uridine(34) in tRNA + AH2 + ATP = 2-thiouridine(34) in tRNA + L-cysteinyl-[protein] + A + AMP + diphosphate + H(+). In terms of biological role, catalyzes the 2-thiolation of uridine at the wobble position (U34) of tRNA, leading to the formation of s(2)U34. The chain is tRNA-specific 2-thiouridylase MnmA from Acholeplasma laidlawii (strain PG-8A).